We begin with the raw amino-acid sequence, 420 residues long: Serine protease inhibitor A3B (420 aa).

Residues 1-17 (MAFIAALGLLMAEICPA) form the signal peptide. 2 N-linked (GlcNAc...) asparagine glycosylation sites follow: Asn104 and Asn349. Residues 367–392 (GTEGDAITIVGYNFMSAKLKPVFVKF) form an RCL region.

This sequence belongs to the serpin family.

Its subcellular location is the secreted. This Mus musculus (Mouse) protein is Serine protease inhibitor A3B (Serpina3b).